A 459-amino-acid polypeptide reads, in one-letter code: FBD-associated F-box protein At5g27750 (459 aa).

The F-box domain occupies 4–50; that stretch reads FDRISELPESLITQILLCLPTKDSVKTSVLSTRWKNLWLNVPGLDLT. The region spanning 374 to 426 is the FBD domain; that stretch reads TEELNLINVPRCIVSTLECVEIKGLFEWEEEEMKIARYFLENAAVLKKLTMSF.

The chain is FBD-associated F-box protein At5g27750 from Arabidopsis thaliana (Mouse-ear cress).